Consider the following 432-residue polypeptide: MGSPSSSMTEGDVECFSEYMELWIHRLRIEGLRLWLSGILRIQVGLVSMENLNHQLSSCGFALHRDLDKNYVFRVMYSGCFVQLEHGNYVIVLNLLKRVSRFGGRTQKFMMKCPAVLAPPNREYIQCDSDSIQVTREIPVDNWNNELDWSLALRGSLVVALEDSSLIQINVEMHKPNITVQGRRDTILSPVQVFASEGHFLPLKLVSGNYAYSMEATCPNGNTSSSNETVLHIYKRRMGLTKRGGYQNETLSVSSVMVEQTDTFSWTETTDFVQLIIPTSYIQQNKECLSQTGEKLQQNFYKIDAVLTFKETNHKMHWTMENTSPCSELLKSHSVYDDPQKANFTTHSPTWTAERPEIPADYTTNLTPSVSPSTTSTALQTADPDTGTTSMPTPQLKTTEVFNTSTPLSSQEVFSSTLYSPNHNSTSSSVHQ.

As to expression, expressed specifically by cells of the ciliated left-right organizer.

This chain is Ciliated left-right organizer protein containing ZP-N domains homolog (ciroz), found in Danio rerio (Zebrafish).